A 542-amino-acid chain; its full sequence is Membrane protein insertase YidC (542 aa).

The chain crosses the membrane as a helical span at residues 6–26; it reads NILLIGLLFVSFLLWQQWQAD. The span at 32-41 shows a compositional bias: polar residues; it reads VAQTQSSVAP. The disordered stretch occupies residues 32–57; that stretch reads VAQTQSSVAPSTVADAHSSDVPDADS. Transmembrane regions (helical) follow at residues 326 to 346, 350 to 370, 421 to 441, 458 to 478, and 501 to 521; these read LVVD…LLMF, FVGN…GMLY, GGCL…WVLL, LSVQ…MFIM, and VIFT…WLVG.

It belongs to the OXA1/ALB3/YidC family. Type 1 subfamily. As to quaternary structure, interacts with the Sec translocase complex via SecD. Specifically interacts with transmembrane segments of nascent integral membrane proteins during membrane integration.

It localises to the cell inner membrane. Its function is as follows. Required for the insertion and/or proper folding and/or complex formation of integral membrane proteins into the membrane. Involved in integration of membrane proteins that insert both dependently and independently of the Sec translocase complex, as well as at least some lipoproteins. Aids folding of multispanning membrane proteins. The protein is Membrane protein insertase YidC of Shewanella piezotolerans (strain WP3 / JCM 13877).